The sequence spans 439 residues: Enolase 2 (439 aa).

Substrate-binding residues include H160 and E169. E212 acts as the Proton donor in catalysis. Positions 247, 296, and 323 each coordinate Mg(2+). 2 residues coordinate substrate: E296 and D323. Catalysis depends on K348, which acts as the Proton acceptor. Substrate contacts are provided by residues S375–S378 and K399.

Belongs to the enolase family. In terms of assembly, homodimer. It depends on Mg(2+) as a cofactor.

The protein resides in the cytoplasm. The catalysed reaction is (2R)-2-phosphoglycerate = phosphoenolpyruvate + H2O. The protein operates within carbohydrate degradation; glycolysis; pyruvate from D-glyceraldehyde 3-phosphate: step 4/5. The chain is Enolase 2 (ENO2) from Debaryomyces hansenii (strain ATCC 36239 / CBS 767 / BCRC 21394 / JCM 1990 / NBRC 0083 / IGC 2968) (Yeast).